A 236-amino-acid polypeptide reads, in one-letter code: 5'-methylthioadenosine/S-adenosylhomocysteine nucleosidase (236 aa).

Glu12 serves as the catalytic Proton acceptor. Residues Gly78, Ile153, and 174-175 (ME) each bind substrate. Residue Asp198 is the Proton donor of the active site.

This sequence belongs to the PNP/UDP phosphorylase family. MtnN subfamily.

The enzyme catalyses S-adenosyl-L-homocysteine + H2O = S-(5-deoxy-D-ribos-5-yl)-L-homocysteine + adenine. The catalysed reaction is S-methyl-5'-thioadenosine + H2O = 5-(methylsulfanyl)-D-ribose + adenine. It catalyses the reaction 5'-deoxyadenosine + H2O = 5-deoxy-D-ribose + adenine. It participates in amino-acid biosynthesis; L-methionine biosynthesis via salvage pathway; S-methyl-5-thio-alpha-D-ribose 1-phosphate from S-methyl-5'-thioadenosine (hydrolase route): step 1/2. Catalyzes the irreversible cleavage of the glycosidic bond in both 5'-methylthioadenosine (MTA) and S-adenosylhomocysteine (SAH/AdoHcy) to adenine and the corresponding thioribose, 5'-methylthioribose and S-ribosylhomocysteine, respectively. Also cleaves 5'-deoxyadenosine, a toxic by-product of radical S-adenosylmethionine (SAM) enzymes, into 5-deoxyribose and adenine. This is 5'-methylthioadenosine/S-adenosylhomocysteine nucleosidase from Shewanella oneidensis (strain ATCC 700550 / JCM 31522 / CIP 106686 / LMG 19005 / NCIMB 14063 / MR-1).